A 179-amino-acid chain; its full sequence is Large ribosomal subunit protein uL10 (179 aa).

This sequence belongs to the universal ribosomal protein uL10 family. Part of the ribosomal stalk of the 50S ribosomal subunit. The N-terminus interacts with L11 and the large rRNA to form the base of the stalk. The C-terminus forms an elongated spine to which L12 dimers bind in a sequential fashion forming a multimeric L10(L12)X complex.

In terms of biological role, forms part of the ribosomal stalk, playing a central role in the interaction of the ribosome with GTP-bound translation factors. The sequence is that of Large ribosomal subunit protein uL10 from Polynucleobacter necessarius subsp. necessarius (strain STIR1).